Here is a 245-residue protein sequence, read N- to C-terminus: Leucyl/phenylalanyl-tRNA--protein transferase (245 aa).

Belongs to the L/F-transferase family.

Its subcellular location is the cytoplasm. The enzyme catalyses N-terminal L-lysyl-[protein] + L-leucyl-tRNA(Leu) = N-terminal L-leucyl-L-lysyl-[protein] + tRNA(Leu) + H(+). It catalyses the reaction N-terminal L-arginyl-[protein] + L-leucyl-tRNA(Leu) = N-terminal L-leucyl-L-arginyl-[protein] + tRNA(Leu) + H(+). The catalysed reaction is L-phenylalanyl-tRNA(Phe) + an N-terminal L-alpha-aminoacyl-[protein] = an N-terminal L-phenylalanyl-L-alpha-aminoacyl-[protein] + tRNA(Phe). Functions in the N-end rule pathway of protein degradation where it conjugates Leu, Phe and, less efficiently, Met from aminoacyl-tRNAs to the N-termini of proteins containing an N-terminal arginine or lysine. The sequence is that of Leucyl/phenylalanyl-tRNA--protein transferase from Paraburkholderia phytofirmans (strain DSM 17436 / LMG 22146 / PsJN) (Burkholderia phytofirmans).